A 301-amino-acid polypeptide reads, in one-letter code: uncharacterized protein (301 aa).

9 helical membrane passes run M1–V21, S33–Y53, A72–G92, F101–I121, F124–Y144, Y185–I205, I220–A240, F246–I266, and I270–I290.

It belongs to the TerC family.

The protein localises to the cell membrane. This is an uncharacterized protein from Rickettsia felis (strain ATCC VR-1525 / URRWXCal2) (Rickettsia azadi).